The following is a 366-amino-acid chain: DNA replication and repair protein RecF (366 aa).

30–37 is a binding site for ATP; it reads GRNAQGKT.

Belongs to the RecF family.

It is found in the cytoplasm. Functionally, the RecF protein is involved in DNA metabolism; it is required for DNA replication and normal SOS inducibility. RecF binds preferentially to single-stranded, linear DNA. It also seems to bind ATP. This chain is DNA replication and repair protein RecF, found in Streptococcus thermophilus (strain ATCC BAA-250 / LMG 18311).